A 265-amino-acid chain; its full sequence is Regulator of calcineurin 2 (265 aa).

Phosphoserine occurs at positions 104 and 110. Disordered regions lie at residues 127–213 (LLSI…DKSA) and 242–265 (ENDV…EFFH). At threonine 132 the chain carries Phosphothreonine. 2 stretches are compositionally biased toward low complexity: residues 141–161 (SSSL…LESP) and 182–202 (LSRS…QTSL). A phosphoserine mark is found at serine 152, serine 157, serine 160, serine 183, serine 187, serine 193, serine 201, and serine 255.

Phosphorylation of Ser-152 and Ser-160 is induced 2-fold in response to mating pheromone.

It localises to the cytoplasm. This chain is Regulator of calcineurin 2 (RCN2), found in Saccharomyces cerevisiae (strain ATCC 204508 / S288c) (Baker's yeast).